A 332-amino-acid chain; its full sequence is GTP 3',8-cyclase (332 aa).

The region spanning 9–220 is the Radical SAM core domain; it reads RFARKVDYLR…DQVRERIAER (212 aa). Arginine 18 lines the GTP pocket. Residues cysteine 25 and cysteine 29 each coordinate [4Fe-4S] cluster. Position 31 (tyrosine 31) interacts with S-adenosyl-L-methionine. Cysteine 32 lines the [4Fe-4S] cluster pocket. A GTP-binding site is contributed by arginine 67. Residue glycine 71 coordinates S-adenosyl-L-methionine. Threonine 98 serves as a coordination point for GTP. Serine 122 is an S-adenosyl-L-methionine binding site. Residue lysine 159 participates in GTP binding. Methionine 193 lines the S-adenosyl-L-methionine pocket. [4Fe-4S] cluster contacts are provided by cysteine 258 and cysteine 261. 263 to 265 contributes to the GTP binding site; sequence RVR. Cysteine 275 provides a ligand contact to [4Fe-4S] cluster.

It belongs to the radical SAM superfamily. MoaA family. As to quaternary structure, monomer and homodimer. [4Fe-4S] cluster is required as a cofactor.

It catalyses the reaction GTP + AH2 + S-adenosyl-L-methionine = (8S)-3',8-cyclo-7,8-dihydroguanosine 5'-triphosphate + 5'-deoxyadenosine + L-methionine + A + H(+). It participates in cofactor biosynthesis; molybdopterin biosynthesis. Functionally, catalyzes the cyclization of GTP to (8S)-3',8-cyclo-7,8-dihydroguanosine 5'-triphosphate. This Pseudomonas syringae pv. syringae (strain B728a) protein is GTP 3',8-cyclase.